The primary structure comprises 188 residues: MAAPGRPARETAAAPGPGRPTCRDAASRTKKQKKKTRDGASVANGSGKTPEKQDPKEAPLSAEAQAEQLARELAWCVEKLELGLKMQRPTPKQKEQALGAIRTLRSQRTPLPRKRQLMRSLFGDYRAQIEAEWREALQALRTAAHSAQVQPVGEAARKKSRRVCRPRPEGRSKGTSDTRDEEFRFNFF.

3 disordered regions span residues 1 to 65 (MAAP…AEAQ), 87 to 112 (QRPTPKQKEQALGAIRTLRSQRTPLP), and 144 to 182 (AHSAQVQPVGEAARKKSRRVCRPRPEGRSKGTSDTRDEE). Position 2 is an N-acetylalanine (A2). S41 carries the post-translational modification Phosphoserine. Over residues 166–182 (PRPEGRSKGTSDTRDEE) the composition is skewed to basic and acidic residues.

The protein belongs to the UPF0488 family.

The sequence is that of UPF0488 protein C8orf33 homolog from Bos taurus (Bovine).